The following is a 247-amino-acid chain: Mannose-P-dolichol utilization defect 1 protein (247 aa).

N-acetylalanine is present on A2. 7 helical membrane-spanning segments follow: residues 37-57 (CLKILLSKGLGLGIVAGSLLV), 74-94 (LSLQSVMLELVALTGTVVYSI), 100-120 (FSSWGEALFLTLQTVAICFLV), 128-145 (VKGVAFLACYAMVLLALL), 151-171 (LAVVTLLQASNVPAVVVGKLL), 185-205 (LSAITVFMLFGGSLARIFTSV), and 213-233 (MAGVFVVSSLCNGLIAAQVLF). One can recognise a PQ-loop 1 domain in the interval 39 to 105 (KILLSKGLGL…NNFPFSSWGE (67 aa)). A PQ-loop 2 domain is found at 159–216 (ASNVPAVVVGKLLQAATNYRNGHTGQLSAITVFMLFGGSLARIFTSVQETGDPLMAGV).

It belongs to the MPDU1 (TC 2.A.43.3) family.

Its subcellular location is the membrane. In terms of biological role, required for normal utilization of mannose-dolichol phosphate (Dol-P-Man) in the synthesis of N-linked and O-linked oligosaccharides and GPI anchors. This chain is Mannose-P-dolichol utilization defect 1 protein (Mpdu1), found in Mus musculus (Mouse).